Reading from the N-terminus, the 450-residue chain is UDP-N-acetylmuramoylalanine--D-glutamate ligase (450 aa).

Residue 115–121 (GTNGKTT) participates in ATP binding.

Belongs to the MurCDEF family.

It localises to the cytoplasm. It catalyses the reaction UDP-N-acetyl-alpha-D-muramoyl-L-alanine + D-glutamate + ATP = UDP-N-acetyl-alpha-D-muramoyl-L-alanyl-D-glutamate + ADP + phosphate + H(+). It functions in the pathway cell wall biogenesis; peptidoglycan biosynthesis. In terms of biological role, cell wall formation. Catalyzes the addition of glutamate to the nucleotide precursor UDP-N-acetylmuramoyl-L-alanine (UMA). The protein is UDP-N-acetylmuramoylalanine--D-glutamate ligase of Desulfatibacillum aliphaticivorans.